The chain runs to 140 residues: Peptidyl-prolyl cis-trans isomerase FKBP2 (140 aa).

A signal peptide spans 1-22; it reads MRLSWILTILSICLSALAAATG. A PPIase FKBP-type domain is found at 47-135; it reads GDVLHMHYTG…VFEVELLKIE (89 aa). The short motif at 137–140 is the Prevents secretion from ER element; it reads RSEL.

The protein belongs to the FKBP-type PPIase family. FKBP2 subfamily. As to quaternary structure, interacts with ARFGEF1/BIG1 and the C-terminal of EPB41L2.

It localises to the endoplasmic reticulum membrane. It catalyses the reaction [protein]-peptidylproline (omega=180) = [protein]-peptidylproline (omega=0). Inhibited by both FK506 and rapamycin. PPIases accelerate the folding of proteins. It catalyzes the cis-trans isomerization of proline imidic peptide bonds in oligopeptides. The chain is Peptidyl-prolyl cis-trans isomerase FKBP2 (Fkbp2) from Mus musculus (Mouse).